The following is a 272-amino-acid chain: MLNRLLIFITLALAVRALDCSSKELQQYNLESVKGTYSISNIKSTPPSKTNITWSIGICEPIKDVADCPQNSDVCGITSILIDGKSPVVSEIIGFNSNVQKEYETIAEGDGGIIVKDKAVNWGDSLIDAEIHFICDKNAKENDLKLDKWDGQSVKLSFKSKAACITSDKDKKKNNGNNNDNNKNNDKKKDNGELWGWFTWIFIFLVLFLSIYYCGVRARGSSTIRETPFYFQSALKEVIENFIDLLKSLPSFIREIIERFTGSSGRAEYSAV.

The signal sequence occupies residues 1-17 (MLNRLLIFITLALAVRA). Residues 18 to 166 (LDCSSKELQQ…SFKSKAACIT (149 aa)) form the MRH domain. The Lumenal segment spans residues 18–193 (LDCSSKELQQ…NNDKKKDNGE (176 aa)). Cystine bridges form between Cys-20-Cys-59, Cys-68-Cys-75, and Cys-135-Cys-164. A helical membrane pass occupies residues 194-214 (LWGWFTWIFIFLVLFLSIYYC). Topologically, residues 215–272 (GVRARGSSTIRETPFYFQSALKEVIENFIDLLKSLPSFIREIIERFTGSSGRAEYSAV) are cytoplasmic.

Belongs to the ATG27 family.

It is found in the cytoplasmic vesicle membrane. The protein resides in the golgi apparatus membrane. The protein localises to the mitochondrion membrane. It localises to the preautophagosomal structure membrane. Functionally, effector of VPS34 phosphatidylinositol 3-phosphate kinase signaling. Regulates the cytoplasm to vacuole transport (Cvt) vesicle formation. Plays a role in ATG protein retrieval from the pre-autophagosomal structure (PAS) and is especially required for autophagy-dependent cycling of ATG9. This is Autophagy-related protein 27 (ATG27) from Lodderomyces elongisporus (strain ATCC 11503 / CBS 2605 / JCM 1781 / NBRC 1676 / NRRL YB-4239) (Yeast).